The primary structure comprises 195 residues: Protein GrpE (195 aa).

Over residues 1-14 (MQEPHDQEPIEKQK) the composition is skewed to basic and acidic residues. The tract at residues 1 to 45 (MQEPHDQEPIEKQKLPGMDDVLETEHSGTVAGNTERAGEDAAPSL) is disordered.

The protein belongs to the GrpE family. In terms of assembly, homodimer.

It is found in the cytoplasm. Its function is as follows. Participates actively in the response to hyperosmotic and heat shock by preventing the aggregation of stress-denatured proteins, in association with DnaK and GrpE. It is the nucleotide exchange factor for DnaK and may function as a thermosensor. Unfolded proteins bind initially to DnaJ; upon interaction with the DnaJ-bound protein, DnaK hydrolyzes its bound ATP, resulting in the formation of a stable complex. GrpE releases ADP from DnaK; ATP binding to DnaK triggers the release of the substrate protein, thus completing the reaction cycle. Several rounds of ATP-dependent interactions between DnaJ, DnaK and GrpE are required for fully efficient folding. This is Protein GrpE from Nitrosomonas europaea (strain ATCC 19718 / CIP 103999 / KCTC 2705 / NBRC 14298).